The sequence spans 303 residues: Ferrochelatase (303 aa).

Fe cation-binding residues include His-185 and Glu-262.

Belongs to the ferrochelatase family.

The protein resides in the cytoplasm. The catalysed reaction is heme b + 2 H(+) = protoporphyrin IX + Fe(2+). It functions in the pathway porphyrin-containing compound metabolism; protoheme biosynthesis; protoheme from protoporphyrin-IX: step 1/1. In terms of biological role, catalyzes the ferrous insertion into protoporphyrin IX. This is Ferrochelatase from Campylobacter jejuni subsp. doylei (strain ATCC BAA-1458 / RM4099 / 269.97).